A 201-amino-acid polypeptide reads, in one-letter code: Small ribosomal subunit protein uS4 (201 aa).

The interval 28-47 (KKNYPPGQHGNSRKRKTSEY) is disordered. Positions 92 to 155 (GRLDNIVFRL…KSLEVIANSL (64 aa)) constitute an S4 RNA-binding domain.

Belongs to the universal ribosomal protein uS4 family. In terms of assembly, part of the 30S ribosomal subunit. Contacts protein S5. The interaction surface between S4 and S5 is involved in control of translational fidelity.

Functionally, one of the primary rRNA binding proteins, it binds directly to 16S rRNA where it nucleates assembly of the body of the 30S subunit. With S5 and S12 plays an important role in translational accuracy. The protein is Small ribosomal subunit protein uS4 of Bacteroides fragilis (strain YCH46).